The following is an 899-amino-acid chain: Calcium-transporting ATPase 1 (899 aa).

Helical transmembrane passes span F59–G79, N80–V100, Q247–G267, and V282–L302. Residue D329 is the 4-aspartylphosphate intermediate of the active site. A run of 4 helical transmembrane segments spans residues F688 to F708, Q757 to F777, F827 to F847, and E854 to V874. S892 carries the phosphoserine modification.

The protein belongs to the cation transport ATPase (P-type) (TC 3.A.3) family.

The protein resides in the endoplasmic reticulum membrane. It carries out the reaction Ca(2+)(in) + ATP + H2O = Ca(2+)(out) + ADP + phosphate + H(+). Its function is as follows. Transports calcium and manganese ions into the cell. Regulates cell morphogenesis through control of manganese and calcium homeostasis. The protein is Calcium-transporting ATPase 1 (pmr1) of Schizosaccharomyces pombe (strain 972 / ATCC 24843) (Fission yeast).